Here is a 177-residue protein sequence, read N- to C-terminus: MNDHDGVLTHLDEQGAARMVDVSAKAVTLRRARASGAVLMKPSTLDMICHGTAAKGDVIATARIAGIMAAKRTGELIPLCHPLGIEAVTVTLEPQGADRLSIAATVTTVARTGVEMEALTAVTVTALTVYDMCKAVDRAMTITDIRLDEKSGGRSGHYRRHDADVKPSDGGSTEDGC.

Substrate-binding positions include 79–81 and 116–117; these read LCH and ME. Asp131 is a catalytic residue. The tract at residues 150 to 177 is disordered; it reads KSGGRSGHYRRHDADVKPSDGGSTEDGC.

It belongs to the MoaC family. As to quaternary structure, homohexamer; trimer of dimers.

The enzyme catalyses (8S)-3',8-cyclo-7,8-dihydroguanosine 5'-triphosphate = cyclic pyranopterin phosphate + diphosphate. It participates in cofactor biosynthesis; molybdopterin biosynthesis. Functionally, catalyzes the conversion of (8S)-3',8-cyclo-7,8-dihydroguanosine 5'-triphosphate to cyclic pyranopterin monophosphate (cPMP). The sequence is that of Cyclic pyranopterin monophosphate synthase 3 (moaC3) from Mycobacterium bovis (strain ATCC BAA-935 / AF2122/97).